The sequence spans 322 residues: Formimidoylglutamase (322 aa).

Residues His-127, Asp-163, His-165, Asp-167, Asp-254, and Asp-256 each contribute to the Mn(2+) site.

Belongs to the arginase family. Mn(2+) is required as a cofactor.

The enzyme catalyses N-formimidoyl-L-glutamate + H2O = formamide + L-glutamate. It functions in the pathway amino-acid degradation; L-histidine degradation into L-glutamate; L-glutamate from N-formimidoyl-L-glutamate (hydrolase route): step 1/1. In terms of biological role, catalyzes the conversion of N-formimidoyl-L-glutamate to L-glutamate and formamide. In Paraburkholderia xenovorans (strain LB400), this protein is Formimidoylglutamase.